Here is a 738-residue protein sequence, read N- to C-terminus: DNA topoisomerase 4 subunit A (738 aa).

A Topo IIA-type catalytic domain is found at 32–496 (LPDVRDGLKP…SFEEVTLTNQ (465 aa)). Residue Tyr120 is the O-(5'-phospho-DNA)-tyrosine intermediate of the active site.

Belongs to the type II topoisomerase GyrA/ParC subunit family. ParC type 1 subfamily. Heterotetramer composed of ParC and ParE.

It is found in the cell membrane. It carries out the reaction ATP-dependent breakage, passage and rejoining of double-stranded DNA.. In terms of biological role, topoisomerase IV is essential for chromosome segregation. It relaxes supercoiled DNA. Performs the decatenation events required during the replication of a circular DNA molecule. This chain is DNA topoisomerase 4 subunit A, found in Rickettsia conorii (strain ATCC VR-613 / Malish 7).